The primary structure comprises 314 residues: Ribonuclease Z (314 aa).

Residues His-61, His-63, Asp-65, His-66, His-137, Asp-207, and His-263 each coordinate Zn(2+). Asp-65 acts as the Proton acceptor in catalysis.

The protein belongs to the RNase Z family. Homodimer. The cofactor is Zn(2+).

It catalyses the reaction Endonucleolytic cleavage of RNA, removing extra 3' nucleotides from tRNA precursor, generating 3' termini of tRNAs. A 3'-hydroxy group is left at the tRNA terminus and a 5'-phosphoryl group is left at the trailer molecule.. Zinc phosphodiesterase, which displays some tRNA 3'-processing endonuclease activity. Probably involved in tRNA maturation, by removing a 3'-trailer from precursor tRNA. The protein is Ribonuclease Z of Thermococcus gammatolerans (strain DSM 15229 / JCM 11827 / EJ3).